Here is a 584-residue protein sequence, read N- to C-terminus: 2-succinyl-5-enolpyruvyl-6-hydroxy-3-cyclohexene-1-carboxylate synthase (584 aa).

Belongs to the TPP enzyme family. MenD subfamily. Homodimer. The cofactor is Mg(2+). Requires Mn(2+) as cofactor. Thiamine diphosphate serves as cofactor.

The enzyme catalyses isochorismate + 2-oxoglutarate + H(+) = 5-enolpyruvoyl-6-hydroxy-2-succinyl-cyclohex-3-ene-1-carboxylate + CO2. It functions in the pathway quinol/quinone metabolism; 1,4-dihydroxy-2-naphthoate biosynthesis; 1,4-dihydroxy-2-naphthoate from chorismate: step 2/7. The protein operates within quinol/quinone metabolism; menaquinone biosynthesis. Its function is as follows. Catalyzes the thiamine diphosphate-dependent decarboxylation of 2-oxoglutarate and the subsequent addition of the resulting succinic semialdehyde-thiamine pyrophosphate anion to isochorismate to yield 2-succinyl-5-enolpyruvyl-6-hydroxy-3-cyclohexene-1-carboxylate (SEPHCHC). This is 2-succinyl-5-enolpyruvyl-6-hydroxy-3-cyclohexene-1-carboxylate synthase from Bacillus thuringiensis subsp. konkukian (strain 97-27).